Here is a 547-residue protein sequence, read N- to C-terminus: Glucose-6-phosphate isomerase (547 aa).

The active-site Proton donor is the Glu-354. Residues His-385 and Lys-513 contribute to the active site.

This sequence belongs to the GPI family.

It is found in the cytoplasm. It catalyses the reaction alpha-D-glucose 6-phosphate = beta-D-fructose 6-phosphate. Its pathway is carbohydrate biosynthesis; gluconeogenesis. It functions in the pathway carbohydrate degradation; glycolysis; D-glyceraldehyde 3-phosphate and glycerone phosphate from D-glucose: step 2/4. Catalyzes the reversible isomerization of glucose-6-phosphate to fructose-6-phosphate. The polypeptide is Glucose-6-phosphate isomerase (Erwinia tasmaniensis (strain DSM 17950 / CFBP 7177 / CIP 109463 / NCPPB 4357 / Et1/99)).